Reading from the N-terminus, the 364-residue chain is Aminomethyltransferase (364 aa).

The protein belongs to the GcvT family. The glycine cleavage system is composed of four proteins: P, T, L and H.

It catalyses the reaction N(6)-[(R)-S(8)-aminomethyldihydrolipoyl]-L-lysyl-[protein] + (6S)-5,6,7,8-tetrahydrofolate = N(6)-[(R)-dihydrolipoyl]-L-lysyl-[protein] + (6R)-5,10-methylene-5,6,7,8-tetrahydrofolate + NH4(+). Functionally, the glycine cleavage system catalyzes the degradation of glycine. In Shewanella woodyi (strain ATCC 51908 / MS32), this protein is Aminomethyltransferase.